Consider the following 509-residue polypeptide: Glutamyl-tRNA(Gln) amidotransferase subunit B, mitochondrial (509 aa).

The protein belongs to the GatB/GatE family. GatB subfamily. Subunit of the heterotrimeric GatFAB amidotransferase (AdT) complex, composed of A, B and F subunits.

The protein localises to the mitochondrion. It carries out the reaction L-glutamyl-tRNA(Gln) + L-glutamine + ATP + H2O = L-glutaminyl-tRNA(Gln) + L-glutamate + ADP + phosphate + H(+). Functionally, allows the formation of correctly charged Gln-tRNA(Gln) through the transamidation of misacylated Glu-tRNA(Gln) in the mitochondria. The reaction takes place in the presence of glutamine and ATP through an activated gamma-phospho-Glu-tRNA(Gln). The protein is Glutamyl-tRNA(Gln) amidotransferase subunit B, mitochondrial of Candida dubliniensis (strain CD36 / ATCC MYA-646 / CBS 7987 / NCPF 3949 / NRRL Y-17841) (Yeast).